The chain runs to 693 residues: Auxin response factor 10 (693 aa).

Positions 115–217 form a DNA-binding region, TF-B3; that stretch reads FAKTLTQSDA…DLCVGIRRAK (103 aa). The PB1 domain occupies 580 to 668; that stretch reads TGHCKVFMES…DIGGDNVRKT (89 aa).

Belongs to the ARF family. Homodimers and heterodimers. As to expression, expressed in the whole plant.

The protein localises to the nucleus. Auxin response factors (ARFs) are transcriptional factors that bind specifically to the DNA sequence 5'-TGTCTC-3' found in the auxin-responsive promoter elements (AuxREs). Could act as transcriptional activator or repressor. Formation of heterodimers with Aux/IAA proteins may alter their ability to modulate early auxin response genes expression. This is Auxin response factor 10 (ARF10) from Arabidopsis thaliana (Mouse-ear cress).